A 218-amino-acid polypeptide reads, in one-letter code: Thiopurine S-methyltransferase (218 aa).

The S-adenosyl-L-methionine site is built by tryptophan 10, leucine 45, glutamate 66, and arginine 123.

The protein belongs to the class I-like SAM-binding methyltransferase superfamily. TPMT family.

The protein localises to the cytoplasm. The enzyme catalyses S-adenosyl-L-methionine + a thiopurine = S-adenosyl-L-homocysteine + a thiopurine S-methylether.. The chain is Thiopurine S-methyltransferase from Shewanella oneidensis (strain ATCC 700550 / JCM 31522 / CIP 106686 / LMG 19005 / NCIMB 14063 / MR-1).